The chain runs to 206 residues: LexA repressor (206 aa).

Residues 28–48 constitute a DNA-binding region (H-T-H motif); the sequence is RAEIATRLGFKSANAAEEHLK. Catalysis depends on for autocatalytic cleavage activity residues Ser123 and Lys160.

It belongs to the peptidase S24 family. In terms of assembly, homodimer.

The enzyme catalyses Hydrolysis of Ala-|-Gly bond in repressor LexA.. Its function is as follows. Represses a number of genes involved in the response to DNA damage (SOS response), including recA and lexA. In the presence of single-stranded DNA, RecA interacts with LexA causing an autocatalytic cleavage which disrupts the DNA-binding part of LexA, leading to derepression of the SOS regulon and eventually DNA repair. This is LexA repressor from Shewanella sp. (strain MR-4).